The following is a 216-amino-acid chain: Large ribosomal subunit protein uL1 (216 aa).

This sequence belongs to the universal ribosomal protein uL1 family. In terms of assembly, part of the 50S ribosomal subunit.

Binds directly to 23S rRNA. Probably involved in E site tRNA release. Its function is as follows. Protein L1 is also a translational repressor protein, it controls the translation of its operon by binding to its mRNA. The polypeptide is Large ribosomal subunit protein uL1 (Thermococcus kodakarensis (strain ATCC BAA-918 / JCM 12380 / KOD1) (Pyrococcus kodakaraensis (strain KOD1))).